A 426-amino-acid chain; its full sequence is Serine--tRNA ligase (426 aa).

233 to 235 (TSE) is an L-serine binding site. Residue 264–266 (RAE) participates in ATP binding. Residue Glu287 coordinates L-serine. 351–354 (EISS) is an ATP binding site. Ser387 is an L-serine binding site.

It belongs to the class-II aminoacyl-tRNA synthetase family. Type-1 seryl-tRNA synthetase subfamily. As to quaternary structure, homodimer. The tRNA molecule binds across the dimer.

The protein resides in the cytoplasm. It catalyses the reaction tRNA(Ser) + L-serine + ATP = L-seryl-tRNA(Ser) + AMP + diphosphate + H(+). It carries out the reaction tRNA(Sec) + L-serine + ATP = L-seryl-tRNA(Sec) + AMP + diphosphate + H(+). It participates in aminoacyl-tRNA biosynthesis; selenocysteinyl-tRNA(Sec) biosynthesis; L-seryl-tRNA(Sec) from L-serine and tRNA(Sec): step 1/1. Functionally, catalyzes the attachment of serine to tRNA(Ser). Is also able to aminoacylate tRNA(Sec) with serine, to form the misacylated tRNA L-seryl-tRNA(Sec), which will be further converted into selenocysteinyl-tRNA(Sec). This Xanthomonas euvesicatoria pv. vesicatoria (strain 85-10) (Xanthomonas campestris pv. vesicatoria) protein is Serine--tRNA ligase.